The chain runs to 630 residues: Ubiquitin carboxyl-terminal hydrolase MINDY-2 (630 aa).

The tract at residues 1-209 is disordered; the sequence is MESGPESLQP…RVPEEEEGAA (209 aa). Residues 24–33 show a composition bias toward polar residues; the sequence is GSPQEGQQET. S94 bears the Phosphoserine mark. Low complexity-rich tracts occupy residues 141 to 163 and 170 to 191; these read EESA…SCSD and SPSL…SSEF. C267 serves as the catalytic Nucleophile. The active-site Proton acceptor is H449. Positions 508–560 are ubiquitin-binding domain (UBD); that stretch reads GQQDQIDQDYLMALSLQQEQQSQEINWEQIPEGISDLELAKKLQEEEDRRASQ. A compositionally biased stretch (low complexity) spans 564-599; it reads EQEQAAAAAASASASASASASTQAPQSQPVQASPSS. A disordered region spans residues 564 to 630; it reads EQEQAAAAAA…EKEKNSCVIL (67 aa). A compositionally biased stretch (basic and acidic residues) spans 606-630; it reads SERKRKEPREKDKEKEKEKNSCVIL.

The protein belongs to the MINDY deubiquitinase family. FAM63 subfamily.

The catalysed reaction is Thiol-dependent hydrolysis of ester, thioester, amide, peptide and isopeptide bonds formed by the C-terminal Gly of ubiquitin (a 76-residue protein attached to proteins as an intracellular targeting signal).. Its function is as follows. Hydrolase that can remove 'Lys-48'-linked conjugated ubiquitin from proteins. Can also bind to polyubiquitin chains of different linkage types, including 'Lys-6', 'Lys-11', 'Lys-29', 'Lys-33' and 'Lys-63'. May play a regulatory role at the level of protein turnover. The polypeptide is Ubiquitin carboxyl-terminal hydrolase MINDY-2 (MINDY2) (Bos taurus (Bovine)).